Reading from the N-terminus, the 570-residue chain is Biotin biosynthesis bifunctional protein BioHC (570 aa).

Positions 1–29 (MTEVNVRAAATPEEKPFLNRTRHEPANPQ) are disordered. The segment at 1–279 (MTEVNVRAAA…HISHPREVAT (279 aa)) is carboxylesterase. Over residues 12–25 (PEEKPFLNRTRHEP) the composition is skewed to basic and acidic residues. Residues Trp41, 105–106 (SL), and 175–179 (FIALQ) contribute to the substrate site. The Nucleophile role is filled by Ser105. Active-site residues include Asp239 and His267. His267 lines the substrate pocket. The tract at residues 280–570 (MINSFLRQQA…RKPLDESASA (291 aa)) is malonyl-ACP O-methyltransferase.

In the N-terminal section; belongs to the AB hydrolase superfamily. Carboxylesterase BioH family. It in the C-terminal section; belongs to the methyltransferase superfamily.

It catalyses the reaction a carboxylic ester + H2O = an alcohol + a carboxylate + H(+). It carries out the reaction malonyl-[ACP] + S-adenosyl-L-methionine = malonyl-[ACP] methyl ester + S-adenosyl-L-homocysteine. It participates in cofactor biosynthesis; biotin biosynthesis. Converts the free carboxyl group of a malonyl-thioester to its methyl ester by transfer of a methyl group from S-adenosyl-L-methionine (SAM). It allows to synthesize pimeloyl-ACP via the fatty acid synthetic pathway. In terms of biological role, the physiological role of BioH is to remove the methyl group introduced by BioC when the pimeloyl moiety is complete. It allows to synthesize pimeloyl-ACP via the fatty acid synthetic pathway through the hydrolysis of the ester bonds of pimeloyl-ACP esters. The protein is Biotin biosynthesis bifunctional protein BioHC (bioC) of Teredinibacter turnerae (strain ATCC 39867 / T7901).